Here is a 599-residue protein sequence, read N- to C-terminus: DNA-directed RNA polymerase III subunit RPC3 (599 aa).

The disordered stretch occupies residues 335–371; that stretch reads PRLDGLRPRGKGSRSVSPRPQSKRVKTEEGYTKTGDY. The span at 359–371 shows a compositional bias: basic and acidic residues; sequence VKTEEGYTKTGDY. The leucine-zipper stretch occupies residues 526–547; sequence IYKSLSRCFERVAAERAKLPIL.

Belongs to the RNA polymerase beta chain family. Component of the RNA polymerase III (Pol III) complex consisting of 17 subunits.

The protein resides in the nucleus. Its function is as follows. DNA-dependent RNA polymerase catalyzes the transcription of DNA into RNA using the four ribonucleoside triphosphates as substrates. Specific core component of RNA polymerase III which synthesizes small RNAs, such as 5S rRNA and tRNAs. This is DNA-directed RNA polymerase III subunit RPC3 (RPC82) from Yarrowia lipolytica (strain CLIB 122 / E 150) (Yeast).